Consider the following 605-residue polypeptide: Isocitrate dehydrogenase kinase/phosphatase (605 aa).

Residues 327-333 (APGIKGL) and Lys-348 contribute to the ATP site. The active site involves Asp-383.

The protein belongs to the AceK family.

Its subcellular location is the cytoplasm. It catalyses the reaction L-seryl-[isocitrate dehydrogenase] + ATP = O-phospho-L-seryl-[isocitrate dehydrogenase] + ADP + H(+). In terms of biological role, bifunctional enzyme which can phosphorylate or dephosphorylate isocitrate dehydrogenase (IDH) on a specific serine residue. This is a regulatory mechanism which enables bacteria to bypass the Krebs cycle via the glyoxylate shunt in response to the source of carbon. When bacteria are grown on glucose, IDH is fully active and unphosphorylated, but when grown on acetate or ethanol, the activity of IDH declines drastically concomitant with its phosphorylation. In Burkholderia multivorans (strain ATCC 17616 / 249), this protein is Isocitrate dehydrogenase kinase/phosphatase.